Here is a 156-residue protein sequence, read N- to C-terminus: Transcription antitermination protein NusB (156 aa).

The protein belongs to the NusB family.

In terms of biological role, involved in transcription antitermination. Required for transcription of ribosomal RNA (rRNA) genes. Binds specifically to the boxA antiterminator sequence of the ribosomal RNA (rrn) operons. The polypeptide is Transcription antitermination protein NusB (Rickettsia massiliae (strain Mtu5)).